The primary structure comprises 113 residues: Nucleoid-associated protein Syncc9902_0023 (113 aa).

The protein belongs to the YbaB/EbfC family. Homodimer.

Its subcellular location is the cytoplasm. The protein localises to the nucleoid. Functionally, binds to DNA and alters its conformation. May be involved in regulation of gene expression, nucleoid organization and DNA protection. The protein is Nucleoid-associated protein Syncc9902_0023 of Synechococcus sp. (strain CC9902).